Here is a 146-residue protein sequence, read N- to C-terminus: uncharacterized protein (146 aa).

A helical membrane pass occupies residues Phe7 to Asn27.

Belongs to the asfivirus E146L family.

The protein resides in the host membrane. The protein localises to the virion. This is an uncharacterized protein from Ornithodoros (relapsing fever ticks).